A 528-amino-acid polypeptide reads, in one-letter code: UDP-glucuronosyltransferase 2B30 (528 aa).

Residues 1-23 form the signal peptide; it reads MSMKWTSALLLIQLSCYLSSGNC. Position 135 is an N6-succinyllysine (K135). Residue N315 is glycosylated (N-linked (GlcNAc...) asparagine). Residues 493-513 traverse the membrane as a helical segment; it reads VIGFLLACVATVIFIITKCLF.

Belongs to the UDP-glycosyltransferase family. In terms of tissue distribution, expressed in several tissues, including prostate, testis, mammary gland, kidney, adrenals and intestine.

It is found in the microsome membrane. It localises to the endoplasmic reticulum membrane. It carries out the reaction glucuronate acceptor + UDP-alpha-D-glucuronate = acceptor beta-D-glucuronoside + UDP + H(+). Its function is as follows. UDPGTs are of major importance in the conjugation and subsequent elimination of potentially toxic xenobiotics and endogenous compounds. This isozyme has glucuronidating capacity on testosterone, dihydrotestosterone, 5-alpha-androstane-3-alpha,17-beta-diol, androsterone, oestradiol, tetrahydroaldosterone and tetrahydrocortisone. This enzyme is essential to inactivation of several steroids. The polypeptide is UDP-glucuronosyltransferase 2B30 (UGT2B30) (Macaca fascicularis (Crab-eating macaque)).